We begin with the raw amino-acid sequence, 227 residues long: ATP phosphoribosyltransferase (227 aa).

The protein belongs to the ATP phosphoribosyltransferase family. Short subfamily. As to quaternary structure, heteromultimer composed of HisG and HisZ subunits.

It is found in the cytoplasm. It catalyses the reaction 1-(5-phospho-beta-D-ribosyl)-ATP + diphosphate = 5-phospho-alpha-D-ribose 1-diphosphate + ATP. It functions in the pathway amino-acid biosynthesis; L-histidine biosynthesis; L-histidine from 5-phospho-alpha-D-ribose 1-diphosphate: step 1/9. Its function is as follows. Catalyzes the condensation of ATP and 5-phosphoribose 1-diphosphate to form N'-(5'-phosphoribosyl)-ATP (PR-ATP). Has a crucial role in the pathway because the rate of histidine biosynthesis seems to be controlled primarily by regulation of HisG enzymatic activity. The chain is ATP phosphoribosyltransferase from Nitrosospira multiformis (strain ATCC 25196 / NCIMB 11849 / C 71).